The primary structure comprises 311 residues: Protein nfe2 (311 aa).

Responsible for the nodulation efficiency and competitive ability of strain GR4 on alfalfa roots. In Rhizobium meliloti (Ensifer meliloti), this protein is Protein nfe2 (nfe2).